The chain runs to 2545 residues: MNKFFQILEYFKIELSINFSITFIFINILLVFFSTFLYRNIKKVNDPDSYKTSYERKEKDSTFDEEENFDILNIFSNDPKSVENIYELENDIYNKSEESSICSNHNKNLDEKTYKINKKKVTIYLKLNEGLENIKQELHIIDRELKNILQKEENLQLINEEENIIIEKTKSDKYDEKENKSNDNILSKKHDDENINKSDIRNTLDSELKKKYELCKENNQLLENHHNNDNNQEDNNICEIEKQDYNNYNSDNKNHNDIFNYNYEDISLEKDKNIHHTKEITKNDTLCNTLDSIKNNRPTEEKTKNFNYNETNIYEENKKLKDSIVNSKNGENFLLKNNEQNINNNIINVNQKQSSDHKKESFKIDTKKNDQIEQNYQNGKNEKNEENEKNGMNEQNGKNEQNGKNEQNGKNEQNEQNDQIEQNYQNDPNDQNDQNDQNEKNDQNEKNDQNKKNEQNIGPKKTNEISYDSININISNNQNPKLSNVFVEDIKRILPISNNNLENSITTIKNIDDPSNSTKQELQNSDYENMHANKKIENGKESFICDITSNTNITRNSMDIPNIMDRKKSEYDKEVDNVSIKKKSYINHNMQRENTREDPSNNMDYTNKSTSDSNDIENENKMERCTNILGLDKRETVIKINDINKDNKHTNGIKCEDKRKSTSIHMEDINNSTNYLNNKEYNSKGENNNNILGDDKRESTFKIYDIQKSEYNSNDLQYDNKRERTSINLDNGNKNNVDINNYINVDDTKERISINLDNVNKNNVDINNYINDDNTKERTSINLDNGNKNNVDINNYINDDNTKERTSINLDNGNKNNVDINNYINDDNTKERTSINLDNGNKNNVDINNYINVDNTKERTSINLDNGNKKNVDINNYINDDNTKERTSINLDNGNKNNVDINNCINVEDKRERYSHILNINKRESIIKINDMKKTKSDSNDIKINDNRTEMYSNIFEINEKERTSIKVDTVKENKSDSNDIENGNKIERHSNVLYINPTKFDPIKINDINKKGERYYDNIENEDKREIYTNNDEYMDKRESNTNHIYINKKESYLENAKDVIKKESPLNNVEDTKKEESYSKNIENANKEEYESNEETYVNKMEEDSNDIEDISNRKYEYKEGQYLNKGEKYINNIDNVSIKESYYNKREKESIEISNLNKRESCTSNINNFRIRENQSNMVEYENKRKSDNIEINNLNKADIYVNSIKNVSKRNSSYNKKERDSKKDRDSVYDENRRKSSAYQINDIYNIRDKSKEKIDMDTIQDMNKRKSYVDNIHITNKKYSDINNAEDVIREKKYEDYNISVMYNMHNKRDQRKESNINIYNDNNMRRSTINKINDENSMHNVKNEIKNIDNNNNVDKINVNKSNTDKIYMDKIYMDKIYMDKRYMDKRYMDKRYMNKRYMDKIYMDKIYMDKIYMDKIYMDNEYMTDNIIKKNDKYNNNNNNNNSDVVEYVNERKHTSLINEHYLYERKSNVDKMKDINKGENDILYDVYNNSEKKNTKSSLYRNPEIITQGGNDNINNMNEHISSLNKVYRISNKKSNNNYKGQDYTYIVNENSGRNSSMYNNINNSDNMNKKECDFINDKENINKRISEIYDLRQINHNESNIENMENIKNMENIKNMENIKNMENIEHIKNMENMEHIKNIQNIEHIKNIENIQNIQNMEHIKNIESIQNIQNMEHIQNIENIQNIENIQNIENIKTIENIKKNIENINNKGSLMVNSNNINENIKKESDIYKIECDDDHMCDVTKIKGVDKQMSDTHKIKYDDNEKNNENKRKSGINKVFDIIKRTMDSYNIYNLSKCKIDEDNIYMLNEKKKNNINNMNKRKSENTYNINEREKDDMNRRMTENTYNLNKEKNLSVHNIKNIQPYNINNNIYEKTNDTIDNLNETGKNNTNDISIKGSDKNKEYKFYDNENKDNINMIIRDTINMSNLNNNISDNMQMAIHKEEKNIHKMNRKITYTNNLYNINESKTEYTININEQEEKSDFINNDNIKMDNEDKLYNCNERNNHIHKENKRNDIKYDNFKKDNIRKNMDNTKNIENMNNIDNMDNTKHIENVNNMKNIENVNNINNIDNMDNKKHIENVNNMKNIENVNNINNIDNMDNKKHIENINNMKNMENMNNINNIENMNNMKNIENMNNMKNIENMNNINNIENINNMKNIQNINNIENMDNMNNTKYIENMDNMNNIENMNNINNYNKIYDVNIINNKNYDSTYNELYEKDNQEENKNICNDKLDNSINEKTKYMKTLREYFVKSEKEIEDQKKNNMNDMYTRREEEKIKDNEDWKLYDFKNLKEKYKFQMNMKDSEINQLQNNLIDEFKELNEVSKLKNNLKGKTYNSNIGEEMLEENKEKQHGNYVGEYFDRNDMILKERIFEYAKHKTSIDMLKHPDDIKRNSKDLKKWKSQVITKKYADDWLSSDVLLSCFLNFIKLKKYVNITELSVKFQTTTDDIREKLEELEEQDMINGVLDEKGNYIYLSQEEINKLCFEIQSKGKVNTHDDFVKICNKVISLSVNDKDMEKLKEEEEKIIKAKTEIF.

The chain crosses the membrane as a helical span at residues 17 to 37 (INFSITFIFINILLVFFSTFL). A coiled-coil region spans residues 131–161 (LENIKQELHIIDRELKNILQKEENLQLINEE). Disordered regions lie at residues 348 to 462 (NVNQ…PKKT), 587 to 616 (NHNMQRENTREDPSNNMDYTNKSTSDSNDI), and 1214 to 1238 (RNSSYNKKERDSKKDRDSVYDENRR). 3 stretches are compositionally biased toward basic and acidic residues: residues 354 to 371 (SSDHKKESFKIDTKKNDQ), 380 to 391 (KNEKNEENEKNG), and 401 to 413 (QNGKNEQNGKNEQ). Over residues 414-435 (NEQNDQIEQNYQNDPNDQNDQN) the composition is skewed to low complexity. Basic and acidic residues-rich tracts occupy residues 437–454 (QNEKNDQNEKNDQNKKNE) and 590–599 (MQRENTREDP). A compositionally biased stretch (polar residues) spans 600–613 (SNNMDYTNKSTSDS). A compositionally biased stretch (basic and acidic residues) spans 1219–1238 (NKKERDSKKDRDSVYDENRR). Residues 2303-2337 (KEKYKFQMNMKDSEINQLQNNLIDEFKELNEVSKL) are a coiled coil.

It is found in the membrane. This is an uncharacterized protein from Plasmodium falciparum (isolate 3D7).